The following is a 255-amino-acid chain: NADH dehydrogenase [ubiquinone] flavoprotein 2, mitochondrial (255 aa).

The N-terminal 35 residues, 1-35 (MLARLAAKRLLEIRQVFRQPTSQVTRSLSTALNYH), are a transit peptide targeting the mitochondrion. Residues Cys-130, Cys-135, Cys-171, and Cys-175 each coordinate [2Fe-2S] cluster. Residues 214 to 255 (RKGEKPPHGTQNPKRIKCGPEGGNKTLLGEPKPPQFRDLDAC) are disordered.

The protein belongs to the complex I 24 kDa subunit family. In terms of assembly, complex I is composed of at least 49 different subunits. This is a component of the flavoprotein-sulfur (FP) fragment of the enzyme. [2Fe-2S] cluster is required as a cofactor.

The protein resides in the mitochondrion inner membrane. The catalysed reaction is a ubiquinone + NADH + 5 H(+)(in) = a ubiquinol + NAD(+) + 4 H(+)(out). Functionally, core subunit of the mitochondrial membrane respiratory chain NADH dehydrogenase (Complex I) that is believed to belong to the minimal assembly required for catalysis. Complex I functions in the transfer of electrons from NADH to the respiratory chain. The immediate electron acceptor for the enzyme is believed to be ubiquinone. The polypeptide is NADH dehydrogenase [ubiquinone] flavoprotein 2, mitochondrial (Arabidopsis thaliana (Mouse-ear cress)).